The following is a 166-amino-acid chain: NAD(P)H-quinone oxidoreductase subunit I, chloroplastic (166 aa).

2 consecutive 4Fe-4S ferredoxin-type domains span residues 55-84 and 95-124; these read GRIHFEFDKCIACEVCVRVCPIDLPVVDWK and LNYSIDFGICIFCGNCVEYCPTNCLSMTEE. Positions 64, 67, 70, 74, 104, 107, 110, and 114 each coordinate [4Fe-4S] cluster.

Belongs to the complex I 23 kDa subunit family. NDH is composed of at least 16 different subunits, 5 of which are encoded in the nucleus. The cofactor is [4Fe-4S] cluster.

It localises to the plastid. It is found in the chloroplast thylakoid membrane. The catalysed reaction is a plastoquinone + NADH + (n+1) H(+)(in) = a plastoquinol + NAD(+) + n H(+)(out). It catalyses the reaction a plastoquinone + NADPH + (n+1) H(+)(in) = a plastoquinol + NADP(+) + n H(+)(out). Functionally, NDH shuttles electrons from NAD(P)H:plastoquinone, via FMN and iron-sulfur (Fe-S) centers, to quinones in the photosynthetic chain and possibly in a chloroplast respiratory chain. The immediate electron acceptor for the enzyme in this species is believed to be plastoquinone. Couples the redox reaction to proton translocation, and thus conserves the redox energy in a proton gradient. The sequence is that of NAD(P)H-quinone oxidoreductase subunit I, chloroplastic from Palafoxia arida (Spanish needles).